The sequence spans 577 residues: MLNRFRPARLVAQSSRCLPLTRARAGPLPVNNARTLATRAAAVNTKEPTERDNITTLSNGVRVASEDLPDAFSGVGVYIDAGSRYENDYVRGASHIMDRLAFKSTSTRTADEMLETVEKLGGNIQCASSRESMMYQAATFNKAIPTAVELMAETIRDPKLTDEELEGQIMTAQYEVNEIWSKAELILPELVHMAAFKDNTLGNPLLCPKERLDYINRDVIQTYRDAFYRPERLVVAFAGVPHERAVKLAEKYFGDMKASDAPGLSRTGSETSVDSLVSESSEASSESSSSSSDSSESSGGLLSKLFSPKAKKATPNPFLTRVPISTEDLTRPAHYTGGFLTLPSQPPPLNPNLPTFTHIQLAFEGLAISDDDIYALATLQTLLGGGGSFSAGGPGKGMYSRLYTNVLNQHGWVESCVAFNHSYTDSGLFGIAASCYPGRTLPMLQVMCRELHALTTDHGYSALGELEVSRAKNQLRSSLLMNLESRMVELEDLGRQVQVHGRKIPVREMTRRINELTVKDLRRVAKRVVGGMANNAGQGSGAPTVVLQEATVQGLKTTELGWDQIQDTIAQWKLGRR.

Residues 1-35 (MLNRFRPARLVAQSSRCLPLTRARAGPLPVNNART) constitute a mitochondrion transit peptide. Residues 259–301 (SDAPGLSRTGSETSVDSLVSESSEASSESSSSSSDSSESSGGL) are disordered. The span at 269 to 301 (SETSVDSLVSESSEASSESSSSSSDSSESSGGL) shows a compositional bias: low complexity.

This sequence belongs to the peptidase M16 family. As to quaternary structure, heterodimer of mpp (alpha) and pep (beta) subunits, forming the mitochondrial processing protease (MPP) in which mpp is involved in substrate recognition and binding and pep is the catalytic subunit.

The protein resides in the mitochondrion matrix. In terms of biological role, substrate recognition and binding subunit of the essential mitochondrial processing protease (MPP), which cleaves the mitochondrial sequence off newly imported precursors proteins. This Neurospora crassa (strain ATCC 24698 / 74-OR23-1A / CBS 708.71 / DSM 1257 / FGSC 987) protein is Mitochondrial-processing peptidase subunit alpha.